A 790-amino-acid chain; its full sequence is Tumor necrosis factor alpha-induced protein 3 (790 aa).

At alanine 2 the chain carries N-acetylalanine. The tract at residues 58 to 300 (PQFREIIHKA…LTDPENEMKE (243 aa)) is TRAF-binding. In terms of domain architecture, OTU spans 92-263 (LVALKTNGDG…SHHFVPLVTL (172 aa)). Aspartate 100 is an active-site residue. Catalysis depends on cysteine 103, which acts as the Nucleophile. Interaction with ubiquitin stretches follow at residues 157 to 159 (LCY), 190 to 192 (SLE), and 224 to 227 (FAPL). Histidine 256 serves as the catalytic Proton acceptor. The interval 369-775 (AQNPMESSLP…ACDHFGNAKC (407 aa)) is interaction with TNIP1. Residues 381–416 (SLMDVKCETPNCPFFMSVNTQPLCHECSERRQKNQN) form an A20-type 1 zinc finger. Residues 386-453 (KCETPNCPFF…EPLAWNPEEP (68 aa)) form an interaction with RIPK1 region. Residues cysteine 387, cysteine 392, cysteine 404, and cysteine 407 each contribute to the Zn(2+) site. The tract at residues 415 to 467 (QNKLPKLNSKPGPEGLPGMALGASRGEAYEPLAWNPEEPTGGPHSAPPTAPSP) is disordered. Serine 459 is subject to Phosphoserine. A20-type zinc fingers lie at residues 472–507 (ETTAMKCRSPGCPFTLNVQHNGFCERCHNARQLHAS) and 515–548 (HLDPGKCQACLQDVTRTFNGICSTCFKRTTAEAS). Zn(2+)-binding residues include cysteine 478, cysteine 483, cysteine 495, cysteine 498, cysteine 521, cysteine 524, cysteine 536, and cysteine 539. Residues 550–580 (SLSTSLPPSCHQRSKSDPSQLVRSPSPHSCH) are disordered. Positions 566–576 (DPSQLVRSPSP) are enriched in polar residues. The residue at position 575 (serine 575) is a Phosphoserine. The segment at 601 to 636 (RTGTSKCRKAGCMYFGTPENKGFCTLCFIEYRENKH) adopts an A20-type 4 zinc-finger fold. The segment at 605-655 (SKCRKAGCMYFGTPENKGFCTLCFIEYRENKHLVAASGKASPTASRFQNTI) is required for proteasomal degradation of UBE2N and UBE2D3, TRAF6 deubiquitination, and TAX1BP1 interaction with UBE2N. The segment at 606–790 (KCRKAGCMYF…ECFQFKQMYG (185 aa)) is sufficient for inhibitory activity of TNF-induced NF-kappa-B activity. Residues cysteine 607, cysteine 612, cysteine 624, and cysteine 627 each coordinate Zn(2+). Residue serine 645 is modified to Phosphoserine. The A20-type 5 zinc-finger motif lies at 651 to 686 (FQNTIPCLGRECGTLGSTMFEGYCQKCFIEAQNQRF). Positions 657, 662, 674, and 677 each coordinate Zn(2+). Over residues 689–705 (AKRTEEQLRSSQRRDVP) the composition is skewed to basic and acidic residues. Residues 689 to 712 (AKRTEEQLRSSQRRDVPRTTQSTS) form a disordered region. The interval 697-790 (RSSQRRDVPR…ECFQFKQMYG (94 aa)) is required for lysosomal localization and for TRAF2 lysosomal degradation. A20-type zinc fingers lie at residues 710–745 (STSRPKCARASCKNILACRSEELCMECQHPNPRMGP) and 756–790 (DPPKQRCWAPACDHFGNAKCNGYCNECFQFKQMYG). Positions 716, 721, 733, 736, 762, 767, 779, and 782 each coordinate Zn(2+).

This sequence belongs to the peptidase C64 family. In terms of assembly, homodimer. Interacts with TNIP1, TAX1BP1 and TRAF2. Interacts with RNF11, ITCH and TAX1BP1 only after TNF stimulation; these interaction are transient and they are lost after 1 hour of stimulation with TNF. Interacts with YWHAZ and YWHAH. Interacts with IKBKG; the interaction is induced by TNF stimulation and by polyubiquitin. Interacts with RIPK1. Interacts with UBE2N; the interaction requires TAX1BP1. Interacts with TRAF6. Proteolytically cleaved by MALT1 upon TCR stimulation; disrupts NF-kappa-B inhibitory function and results in increased IL-2 production. It is proposed that only a fraction of TNFAIP3 colocalized with TCR and CBM complex is cleaved, leaving the main TNFAIP3 pool intact.

It is found in the cytoplasm. It localises to the nucleus. Its subcellular location is the lysosome. The catalysed reaction is Thiol-dependent hydrolysis of ester, thioester, amide, peptide and isopeptide bonds formed by the C-terminal Gly of ubiquitin (a 76-residue protein attached to proteins as an intracellular targeting signal).. In terms of biological role, ubiquitin-editing enzyme that contains both ubiquitin ligase and deubiquitinase activities. Involved in immune and inflammatory responses signaled by cytokines, such as TNF-alpha and IL-1 beta, or pathogens via Toll-like receptors (TLRs) through terminating NF-kappa-B activity. Essential component of a ubiquitin-editing protein complex, comprising also RNF11, ITCH and TAX1BP1, that ensures the transient nature of inflammatory signaling pathways. In cooperation with TAX1BP1 promotes disassembly of E2-E3 ubiquitin protein ligase complexes in IL-1R and TNFR-1 pathways; affected are at least E3 ligases TRAF6, TRAF2 and BIRC2, and E2 ubiquitin-conjugating enzymes UBE2N and UBE2D3. In cooperation with TAX1BP1 promotes ubiquitination of UBE2N and proteasomal degradation of UBE2N and UBE2D3. Upon TNF stimulation, deubiquitinates 'Lys-63'-polyubiquitin chains on RIPK1 and catalyzes the formation of 'Lys-48'-polyubiquitin chains. This leads to RIPK1 proteasomal degradation and consequently termination of the TNF- or LPS-mediated activation of NF-kappa-B. Deubiquitinates TRAF6 probably acting on 'Lys-63'-linked polyubiquitin. Upon T-cell receptor (TCR)-mediated T-cell activation, deubiquitinates 'Lys-63'-polyubiquitin chains on MALT1 thereby mediating disassociation of the CBM (CARD11:BCL10:MALT1) and IKK complexes and preventing sustained IKK activation. Deubiquitinates NEMO/IKBKG; the function is facilitated by TNIP1 and leads to inhibition of NF-kappa-B activation. Upon stimulation by bacterial peptidoglycans, probably deubiquitinates RIPK2. Can also inhibit I-kappa-B-kinase (IKK) through a non-catalytic mechanism which involves polyubiquitin; polyubiquitin promotes association with IKBKG and prevents IKK MAP3K7-mediated phosphorylation. Targets TRAF2 for lysosomal degradation. In vitro able to deubiquitinate 'Lys-11'-, 'Lys-48'- and 'Lys-63' polyubiquitin chains. Inhibitor of programmed cell death. Has a role in the function of the lymphoid system. Required for LPS-induced production of pro-inflammatory cytokines and IFN beta in LPS-tolerized macrophages. The sequence is that of Tumor necrosis factor alpha-induced protein 3 (TNFAIP3) from Macaca fascicularis (Crab-eating macaque).